The chain runs to 194 residues: Peptidyl-tRNA hydrolase (194 aa).

Residue Tyr17 participates in tRNA binding. The active-site Proton acceptor is the His22. Positions 68, 70, and 116 each coordinate tRNA.

It belongs to the PTH family. In terms of assembly, monomer.

It localises to the cytoplasm. It catalyses the reaction an N-acyl-L-alpha-aminoacyl-tRNA + H2O = an N-acyl-L-amino acid + a tRNA + H(+). Functionally, hydrolyzes ribosome-free peptidyl-tRNAs (with 1 or more amino acids incorporated), which drop off the ribosome during protein synthesis, or as a result of ribosome stalling. Catalyzes the release of premature peptidyl moieties from peptidyl-tRNA molecules trapped in stalled 50S ribosomal subunits, and thus maintains levels of free tRNAs and 50S ribosomes. This chain is Peptidyl-tRNA hydrolase, found in Haemophilus influenzae (strain ATCC 51907 / DSM 11121 / KW20 / Rd).